Reading from the N-terminus, the 146-residue chain is Transcriptional regulator MraZ (146 aa).

SpoVT-AbrB domains are found at residues 4-46 (TVFR…SQTE) and 75-118 (TVKV…PEQR).

Belongs to the MraZ family. As to quaternary structure, forms oligomers.

It is found in the cytoplasm. It localises to the nucleoid. This Mesomycoplasma hyopneumoniae (strain 232) (Mycoplasma hyopneumoniae) protein is Transcriptional regulator MraZ.